We begin with the raw amino-acid sequence, 333 residues long: Phosphate acyltransferase (333 aa).

Belongs to the PlsX family. In terms of assembly, homodimer. Probably interacts with PlsY.

Its subcellular location is the cytoplasm. It catalyses the reaction a fatty acyl-[ACP] + phosphate = an acyl phosphate + holo-[ACP]. The protein operates within lipid metabolism; phospholipid metabolism. In terms of biological role, catalyzes the reversible formation of acyl-phosphate (acyl-PO(4)) from acyl-[acyl-carrier-protein] (acyl-ACP). This enzyme utilizes acyl-ACP as fatty acyl donor, but not acyl-CoA. The chain is Phosphate acyltransferase from Lactobacillus gasseri (strain ATCC 33323 / DSM 20243 / BCRC 14619 / CIP 102991 / JCM 1131 / KCTC 3163 / NCIMB 11718 / NCTC 13722 / AM63).